The sequence spans 368 residues: Acetyl-coenzyme A carboxylase carboxyl transferase subunit alpha (368 aa).

Positions E44–E294 constitute a CoA carboxyltransferase C-terminal domain.

This sequence belongs to the AccA family. Acetyl-CoA carboxylase is a heterohexamer composed of biotin carboxyl carrier protein (AccB), biotin carboxylase (AccC) and two subunits each of ACCase subunit alpha (AccA) and ACCase subunit beta (AccD).

Its subcellular location is the cytoplasm. It carries out the reaction N(6)-carboxybiotinyl-L-lysyl-[protein] + acetyl-CoA = N(6)-biotinyl-L-lysyl-[protein] + malonyl-CoA. It functions in the pathway lipid metabolism; malonyl-CoA biosynthesis; malonyl-CoA from acetyl-CoA: step 1/1. Functionally, component of the acetyl coenzyme A carboxylase (ACC) complex. First, biotin carboxylase catalyzes the carboxylation of biotin on its carrier protein (BCCP) and then the CO(2) group is transferred by the carboxyltransferase to acetyl-CoA to form malonyl-CoA. The chain is Acetyl-coenzyme A carboxylase carboxyl transferase subunit alpha from Pelagibacter ubique (strain HTCC1062).